The sequence spans 523 residues: Glutamate--cysteine ligase (523 aa).

Belongs to the glutamate--cysteine ligase type 1 family. Type 1 subfamily.

It carries out the reaction L-cysteine + L-glutamate + ATP = gamma-L-glutamyl-L-cysteine + ADP + phosphate + H(+). It participates in sulfur metabolism; glutathione biosynthesis; glutathione from L-cysteine and L-glutamate: step 1/2. This Baumannia cicadellinicola subsp. Homalodisca coagulata protein is Glutamate--cysteine ligase.